The following is a 134-amino-acid chain: Acyl carrier protein, mitochondrial (134 aa).

The N-terminal 46 residues, 1 to 46, are a transit peptide targeting the mitochondrion; the sequence is MFRTAALTAARVARPAVASAVRAGVARPAFVQAVPKVAAFQAVRFY. One can recognise a Carrier domain in the interval 55–131; the sequence is DEVFSRIAQV…KAVEYILSQP (77 aa). Ser-91 carries the O-(pantetheine 4'-phosphoryl)serine modification.

It belongs to the acyl carrier protein (ACP) family. Complex I is composed of about 30 different subunits. 4'-phosphopantetheine is transferred from CoA to a specific serine of apo-ACP by acpS. This modification is essential for activity because fatty acids are bound in thioester linkage to the sulfhydryl of the prosthetic group.

It localises to the mitochondrion. The protein operates within lipid metabolism; fatty acid biosynthesis. Functionally, carrier of the growing fatty acid chain in fatty acid biosynthesis. May be involved in the synthesis of very-long-chain fatty acids. Accessory and non-catalytic subunit of the mitochondrial membrane respiratory chain NADH dehydrogenase (Complex I), which functions in the transfer of electrons from NADH to the respiratory chain. In Neurospora crassa (strain ATCC 24698 / 74-OR23-1A / CBS 708.71 / DSM 1257 / FGSC 987), this protein is Acyl carrier protein, mitochondrial (nuo-12).